The following is a 374-amino-acid chain: Ribosomal RNA large subunit methyltransferase G (374 aa).

Belongs to the methyltransferase superfamily. RlmG family.

It is found in the cytoplasm. The catalysed reaction is guanosine(1835) in 23S rRNA + S-adenosyl-L-methionine = N(2)-methylguanosine(1835) in 23S rRNA + S-adenosyl-L-homocysteine + H(+). Its function is as follows. Specifically methylates the guanine in position 1835 (m2G1835) of 23S rRNA. This chain is Ribosomal RNA large subunit methyltransferase G, found in Pseudomonas aeruginosa (strain ATCC 15692 / DSM 22644 / CIP 104116 / JCM 14847 / LMG 12228 / 1C / PRS 101 / PAO1).